The primary structure comprises 156 residues: Bursicon (156 aa).

Residues 1–26 (MYALDFLFIAFVYFAACHIQEKPVRA) form the signal peptide. Cystine bridges form between Cys37/Cys86, Cys51/Cys100, Cys61/Cys121, Cys65/Cys123, and Cys83/Cys126. The CTCK domain maps to 37 to 127 (CQMTPVIHIL…PLECMCRPCG (91 aa)).

Heterodimer of burs and pburs.

Its subcellular location is the secreted. Its function is as follows. Final heterodimeric neurohormone released at the end of the molting cycle, involved in the sclerotization (tanning) of the insect cuticle, melanization and wing spreading. This chain is Bursicon, found in Manduca sexta (Tobacco hawkmoth).